The chain runs to 161 residues: uncharacterized protein (161 aa).

The segment at 126-161 is disordered; that stretch reads TPSNCGESSTSSGQSSGDESNCSLRTHGVYTRGEQH. Residues 128-148 are compositionally biased toward low complexity; the sequence is SNCGESSTSSGQSSGDESNCS.

It belongs to the herpesviridae US1 family.

This is an uncharacterized protein from Human cytomegalovirus (strain AD169) (HHV-5).